A 328-amino-acid polypeptide reads, in one-letter code: Gonadotropin-releasing hormone receptor (328 aa).

The Extracellular segment spans residues 1-38 (MANSASPEQNQNHCSASNSSIPLTQANLPTLTLSGKIR). The N-linked (GlcNAc...) asparagine glycan is linked to N18. A helical transmembrane segment spans residues 39–59 (VTVTFFLFLLSTTFNASFLLK). Topologically, residues 60 to 84 (LHKWTQKKENGKKLSKMKVLLKHLT) are cytoplasmic. The chain crosses the membrane as a helical span at residues 85–105 (LANLLETLIVMPLDGMWNITV). At 106-115 (QWYAGELLCK) the chain is on the extracellular side. A disulfide bridge connects residues C114 and C196. A helical transmembrane segment spans residues 116 to 136 (VLSYLKLFSMYAPAFMMVVIS). At 137 to 157 (LDRSLAITRPLAVKSNSKLGR) the chain is on the cytoplasmic side. Residues 158–178 (SMIGLAWLLSSIFAGPQLYIF) form a helical membrane-spanning segment. Topologically, residues 179–208 (RMIHLADSSGQTEGFSQCVTHCSFPQWWHQ) are extracellular. The chain crosses the membrane as a helical span at residues 209-229 (AFYNFFTFSCLFIIPLLFMLI). Topologically, residues 230 to 271 (CNAKIIFTLTRVLHQDPHKLQLNQSKNNIPRARLRTLKMTVA) are cytoplasmic. Residues 272 to 292 (FATSFTVCWTPYYVLGIWYWF) traverse the membrane as a helical segment. Over 293 to 306 (DPEMLNRVSDPVNH) the chain is Extracellular. A helical transmembrane segment spans residues 307–327 (FFFLFALLNPCFDPLIYGYFS). A topological domain (cytoplasmic) is located at residue L328.

The protein belongs to the G-protein coupled receptor 1 family.

It is found in the cell membrane. Its function is as follows. Receptor for gonadotropin releasing hormone (GnRH) that mediates the action of GnRH to stimulate the secretion of the gonadotropic hormones luteinizing hormone (LH) and follicle-stimulating hormone (FSH). This receptor mediates its action by association with G-proteins that activate a phosphatidylinositol-calcium second messenger system. The protein is Gonadotropin-releasing hormone receptor (GNRHR) of Equus caballus (Horse).